A 201-amino-acid polypeptide reads, in one-letter code: CMRF35-like molecule 7 (201 aa).

Residues 1–17 form the signal peptide; it reads MWLPPALLLLSLSGCFS. Residues 18–120 form the Ig-like V-type domain; that stretch reads IQGPESVRAP…PDLGTQVKVI (103 aa). Topologically, residues 18 to 151 are extracellular; sequence IQGPESVRAP…FIGSHKRNHY (134 aa). C36 and C104 are joined by a disulfide. Residues 152–172 traverse the membrane as a helical segment; that stretch reads MLLVFVKVPILLILVTAILWL. The Cytoplasmic portion of the chain corresponds to 173-201; sequence KGSQRVPEEPGEQPIYMNFSEPLTKDMAT. At Y188 the chain carries Phosphotyrosine; by FYN.

Belongs to the CD300 family. Interacts with TYROBP, which enhances cell surface expression and activation properties. Interacts with GRB2 in the presence of FYN. Post-translationally, phosphorylation on Tyr-188 by FYN is required for interaction with GRB2. As to expression, expressed exclusively in myeloid lineages.

Its subcellular location is the cell membrane. Functionally, acts as an activating immune receptor through its interaction with ITAM-bearing adapter TYROBP, and also independently by recruitment of GRB2. This chain is CMRF35-like molecule 7 (CD300LB), found in Homo sapiens (Human).